The following is a 297-amino-acid chain: ATP synthase F(1) complex subunit gamma, mitochondrial (297 aa).

The transit peptide at 1-25 directs the protein to the mitochondrion; the sequence is MFSRAGVAGLSAWTLQPQWIQVRNM. Lys39 carries the post-translational modification N6-acetyllysine. At Lys49 the chain carries N6-succinyllysine. At Lys55 the chain carries N6-acetyllysine. The residue at position 115 (Lys115) is an N6-acetyllysine; alternate. An N6-succinyllysine; alternate modification is found at Lys115. Position 146 is a phosphoserine (Ser146). An N6-acetyllysine; alternate modification is found at Lys154. An N6-succinyllysine; alternate modification is found at Lys154. The residue at position 197 (Lys197) is an N6-acetyllysine. Lys270 is modified (N6-succinyllysine).

Belongs to the ATPase gamma chain family. In terms of assembly, component of the ATP synthase complex composed at least of ATP5F1A/subunit alpha, ATP5F1B/subunit beta, ATP5MC1/subunit c (homooctomer), MT-ATP6/subunit a, MT-ATP8/subunit 8, ATP5ME/subunit e, ATP5MF/subunit f, ATP5MG/subunit g, ATP5MK/subunit k, ATP5MJ/subunit j, ATP5F1C/subunit gamma, ATP5F1D/subunit delta, ATP5F1E/subunit epsilon, ATP5PF/subunit F6, ATP5PB/subunit b, ATP5PD/subunit d, ATP5PO/subunit OSCP. ATP synthase complex consists of a soluble F(1) head domain (subunits alpha(3) and beta(3)) - the catalytic core - and a membrane F(0) domain - the membrane proton channel (subunits c, a, 8, e, f, g, k and j). These two domains are linked by a central stalk (subunits gamma, delta, and epsilon) rotating inside the F1 region and a stationary peripheral stalk (subunits F6, b, d, and OSCP). Interacts with FLVCR2; this interaction occurs in the absence of heme and is disrupted upon heme binding.

The protein localises to the mitochondrion inner membrane. Functionally, subunit gamma, of the mitochondrial membrane ATP synthase complex (F(1)F(0) ATP synthase or Complex V) that produces ATP from ADP in the presence of a proton gradient across the membrane which is generated by electron transport complexes of the respiratory chain. ATP synthase complex consist of a soluble F(1) head domain - the catalytic core - and a membrane F(1) domain - the membrane proton channel. These two domains are linked by a central stalk rotating inside the F(1) region and a stationary peripheral stalk. During catalysis, ATP synthesis in the catalytic domain of F(1) is coupled via a rotary mechanism of the central stalk subunits to proton translocation. In vivo, can only synthesize ATP although its ATP hydrolase activity can be activated artificially in vitro. With the central stalk subunit delta, is essential for the biogenesis of F(1) catalytic part of the ATP synthase complex namely in the formation of F1 assembly intermediate. This Pongo abelii (Sumatran orangutan) protein is ATP synthase F(1) complex subunit gamma, mitochondrial.